Reading from the N-terminus, the 448-residue chain is Trigger factor (448 aa).

One can recognise a PPIase FKBP-type domain in the interval 172 to 257 (GDRVTVDFVG…MKKIEWPHMP (86 aa)).

Belongs to the FKBP-type PPIase family. Tig subfamily.

The protein resides in the cytoplasm. It catalyses the reaction [protein]-peptidylproline (omega=180) = [protein]-peptidylproline (omega=0). Its function is as follows. Involved in protein export. Acts as a chaperone by maintaining the newly synthesized protein in an open conformation. Functions as a peptidyl-prolyl cis-trans isomerase. The sequence is that of Trigger factor from Burkholderia vietnamiensis (strain G4 / LMG 22486) (Burkholderia cepacia (strain R1808)).